Consider the following 203-residue polypeptide: dITP/XTP pyrophosphatase (203 aa).

Ser9 to Lys14 is a substrate binding site. Residues Glu42 and Asp72 each coordinate Mg(2+). Asp72 serves as the catalytic Proton acceptor. Residues Ser73, Phe161–Asp164, Lys184, and His189–Arg190 contribute to the substrate site.

It belongs to the HAM1 NTPase family. As to quaternary structure, homodimer. Mg(2+) is required as a cofactor.

It carries out the reaction XTP + H2O = XMP + diphosphate + H(+). It catalyses the reaction dITP + H2O = dIMP + diphosphate + H(+). The catalysed reaction is ITP + H2O = IMP + diphosphate + H(+). Pyrophosphatase that catalyzes the hydrolysis of nucleoside triphosphates to their monophosphate derivatives, with a high preference for the non-canonical purine nucleotides XTP (xanthosine triphosphate), dITP (deoxyinosine triphosphate) and ITP. Seems to function as a house-cleaning enzyme that removes non-canonical purine nucleotides from the nucleotide pool, thus preventing their incorporation into DNA/RNA and avoiding chromosomal lesions. The chain is dITP/XTP pyrophosphatase from Acidobacterium capsulatum (strain ATCC 51196 / DSM 11244 / BCRC 80197 / JCM 7670 / NBRC 15755 / NCIMB 13165 / 161).